A 211-amino-acid chain; its full sequence is Redox-sensing transcriptional repressor Rex (211 aa).

Residues 17–56 (LYYRFVSILKGKGIDRVNSKTISEALQIDSATIRRDFSYF) constitute a DNA-binding region (H-T-H motif). An NAD(+)-binding site is contributed by 91–96 (GIGNLG).

The protein belongs to the transcriptional regulatory Rex family. In terms of assembly, homodimer.

It is found in the cytoplasm. Modulates transcription in response to changes in cellular NADH/NAD(+) redox state. The protein is Redox-sensing transcriptional repressor Rex of Staphylococcus epidermidis (strain ATCC 35984 / DSM 28319 / BCRC 17069 / CCUG 31568 / BM 3577 / RP62A).